The sequence spans 148 residues: Vascular endothelial growth factor homolog (148 aa).

Residues M1–S25 form the signal peptide. Disulfide bonds link C46–C88, C77–C130, and C81–C132. N95 is a glycosylation site (N-linked (GlcNAc...) asparagine; by host).

It belongs to the PDGF/VEGF growth factor family. Homodimer; disulfide-linked.

The protein localises to the secreted. Its function is as follows. Induces endothelial proliferation. This is Vascular endothelial growth factor homolog from Orf virus (strain NZ7) (OV NZ-7).